Reading from the N-terminus, the 182-residue chain is Translation initiation factor IF-3 (182 aa).

This sequence belongs to the IF-3 family. Monomer.

It is found in the cytoplasm. In terms of biological role, IF-3 binds to the 30S ribosomal subunit and shifts the equilibrium between 70S ribosomes and their 50S and 30S subunits in favor of the free subunits, thus enhancing the availability of 30S subunits on which protein synthesis initiation begins. This is Translation initiation factor IF-3 from Tropheryma whipplei (strain TW08/27) (Whipple's bacillus).